Consider the following 549-residue polypeptide: Oxygen-dependent choline dehydrogenase (549 aa).

4–33 (DFVIIGSGSAGSALAYRLSEDGRNSVIVLE) contacts FAD. Residue H465 is the Proton acceptor of the active site.

This sequence belongs to the GMC oxidoreductase family. FAD is required as a cofactor.

It is found in the cell membrane. The catalysed reaction is choline + A = betaine aldehyde + AH2. It catalyses the reaction betaine aldehyde + NAD(+) + H2O = glycine betaine + NADH + 2 H(+). Its pathway is amine and polyamine biosynthesis; betaine biosynthesis via choline pathway; betaine aldehyde from choline (cytochrome c reductase route): step 1/1. In terms of biological role, involved in the biosynthesis of the osmoprotectant glycine betaine. Catalyzes the oxidation of choline to betaine aldehyde and betaine aldehyde to glycine betaine at the same rate. In Rhizobium meliloti (strain 1021) (Ensifer meliloti), this protein is Oxygen-dependent choline dehydrogenase.